A 508-amino-acid chain; its full sequence is Splicing regulatory glutamine/lysine-rich protein 1 (508 aa).

Residues 66–142 (RTVYVGNLNS…RPLKINHSNN (77 aa)) form the RRM domain. Ser-171 and Ser-184 each carry phosphoserine. The interval 173-508 (ISAAIEPESG…ENLSTKTEAV (336 aa)) is disordered. Residues 180–189 (ESGKSNERKG) are compositionally biased toward basic and acidic residues. Basic residues predominate over residues 190 to 259 (GRSRSHTRSK…KSRSRSHSRD (70 aa)). A compositionally biased stretch (basic and acidic residues) spans 260–355 (KRKDTREKIK…DRSKEIDEKR (96 aa)). A Phosphothreonine modification is found at Thr-363. A compositionally biased stretch (basic residues) spans 372-388 (RRSRSSSRERRRRRSRS). The span at 419-488 (REKERDHISE…DAPRTEENKI (70 aa)) shows a compositional bias: basic and acidic residues. The span at 489–508 (QHNGNCQLNEENLSTKTEAV) shows a compositional bias: polar residues. A Glycyl lysine isopeptide (Lys-Gly) (interchain with G-Cter in SUMO2) cross-link involves residue Lys-504.

This sequence belongs to the splicing factor SR family. In terms of assembly, homodimer. Binds SFRS1, SFRS2, SFRS3 and SFRS6. Interacts with the spliceosome. Interacts with SREK1IP1.

Its subcellular location is the nucleus. In terms of biological role, participates in the regulation of alternative splicing by modulating the activity of other splice facors. Inhibits the splicing activity of SFRS1, SFRS2 and SFRS6. Augments the splicing activity of SFRS3. This is Splicing regulatory glutamine/lysine-rich protein 1 (SREK1) from Homo sapiens (Human).